Reading from the N-terminus, the 462-residue chain is Tubulin gamma-1 chain (462 aa).

142 to 148 (AGGTGSG) contributes to the GTP binding site.

This sequence belongs to the tubulin family.

Its subcellular location is the cytoplasm. The protein resides in the cytoskeleton. It is found in the microtubule organizing center. It localises to the centrosome. Tubulin is the major constituent of microtubules. The gamma chain is found at microtubule organizing centers (MTOC) such as the spindle poles or the centrosome, suggesting that it is involved in the minus-end nucleation of microtubule assembly. The sequence is that of Tubulin gamma-1 chain from Euplotes crassus.